We begin with the raw amino-acid sequence, 643 residues long: Alpha-dioxygenase 1 (643 aa).

His-167 (proton acceptor) is an active-site residue. A Ca(2+)-binding site is contributed by Asp-168. His-172 is a binding site for heme b. Ca(2+)-binding residues include Thr-220, Trp-222, Asp-224, and Ser-226. Residues His-392, Arg-489, and Arg-493 each coordinate heme b.

It belongs to the peroxidase family. It depends on heme b as a cofactor. Ca(2+) serves as cofactor.

Alpha-dioxygenase that catalyzes the primary oxygenation step of a variety of 14-20 carbon fatty acids, containing up to three unsaturated bonds, into their corresponding 2R-hydroperoxides. Involved in the production of oxylipins that function in cell signaling, wound healing, and protection from infection. The lipid-derived signaling pathway is involved in the initial response of hot pepper plants to pathogen infection. In Capsicum annuum (Capsicum pepper), this protein is Alpha-dioxygenase 1.